We begin with the raw amino-acid sequence, 404 residues long: Bifunctional enzyme IspD/IspF (404 aa).

The interval 1–243 (MQAEEQFSCG…KLTRMAIPDV (243 aa)) is 2-C-methyl-D-erythritol 4-phosphate cytidylyltransferase. The 2-C-methyl-D-erythritol 2,4-cyclodiphosphate synthase stretch occupies residues 244-404 (RTGNGYDVHQ…TVVYASGGDA (161 aa)). A divalent metal cation is bound by residues aspartate 250 and histidine 252. 4-CDP-2-C-methyl-D-erythritol 2-phosphate is bound by residues 250-252 (DVH) and 276-277 (HS). Residue histidine 284 participates in a divalent metal cation binding. 4-CDP-2-C-methyl-D-erythritol 2-phosphate contacts are provided by residues 298–300 (DIG), 374–377 (TTNE), phenylalanine 381, and arginine 384.

In the N-terminal section; belongs to the IspD/TarI cytidylyltransferase family. IspD subfamily. This sequence in the C-terminal section; belongs to the IspF family. A divalent metal cation is required as a cofactor.

It catalyses the reaction 2-C-methyl-D-erythritol 4-phosphate + CTP + H(+) = 4-CDP-2-C-methyl-D-erythritol + diphosphate. It carries out the reaction 4-CDP-2-C-methyl-D-erythritol 2-phosphate = 2-C-methyl-D-erythritol 2,4-cyclic diphosphate + CMP. The protein operates within isoprenoid biosynthesis; isopentenyl diphosphate biosynthesis via DXP pathway; isopentenyl diphosphate from 1-deoxy-D-xylulose 5-phosphate: step 2/6. It participates in isoprenoid biosynthesis; isopentenyl diphosphate biosynthesis via DXP pathway; isopentenyl diphosphate from 1-deoxy-D-xylulose 5-phosphate: step 4/6. Functionally, bifunctional enzyme that catalyzes the formation of 4-diphosphocytidyl-2-C-methyl-D-erythritol from CTP and 2-C-methyl-D-erythritol 4-phosphate (MEP) (IspD), and catalyzes the conversion of 4-diphosphocytidyl-2-C-methyl-D-erythritol 2-phosphate (CDP-ME2P) to 2-C-methyl-D-erythritol 2,4-cyclodiphosphate (ME-CPP) with a corresponding release of cytidine 5-monophosphate (CMP) (IspF). The chain is Bifunctional enzyme IspD/IspF from Sinorhizobium medicae (strain WSM419) (Ensifer medicae).